The primary structure comprises 139 residues: Acidic phospholipase A2 H1E6 (139 aa).

An N-terminal signal peptide occupies residues 1-16 (MRTLWILAVLQVGVEG). 7 cysteine pairs are disulfide-bonded: cysteine 42-cysteine 132, cysteine 44-cysteine 60, cysteine 59-cysteine 111, cysteine 65-cysteine 139, cysteine 66-cysteine 104, cysteine 73-cysteine 97, and cysteine 91-cysteine 102. Residues tyrosine 43, glycine 45, and glycine 47 each contribute to the Ca(2+) site. Residue histidine 63 is part of the active site. Aspartate 64 lines the Ca(2+) pocket. Aspartate 105 is an active-site residue.

As to quaternary structure, homodimer. It depends on Ca(2+) as a cofactor. As to expression, expressed by the venom gland.

The protein resides in the secreted. The catalysed reaction is a 1,2-diacyl-sn-glycero-3-phosphocholine + H2O = a 1-acyl-sn-glycero-3-phosphocholine + a fatty acid + H(+). Functionally, snake venom phospholipase A2 (PLA2) that inhibits ADP-induced platelet aggregation. PLA2 catalyzes the calcium-dependent hydrolysis of the 2-acyl groups in 3-sn-phosphoglycerides. In Calloselasma rhodostoma (Malayan pit viper), this protein is Acidic phospholipase A2 H1E6.